The chain runs to 313 residues: Ribosomal RNA small subunit methyltransferase H (313 aa).

Residues 35-37 (GGH), Asp55, Phe79, Asp101, and Gln108 each bind S-adenosyl-L-methionine.

Belongs to the methyltransferase superfamily. RsmH family.

It is found in the cytoplasm. The catalysed reaction is cytidine(1402) in 16S rRNA + S-adenosyl-L-methionine = N(4)-methylcytidine(1402) in 16S rRNA + S-adenosyl-L-homocysteine + H(+). In terms of biological role, specifically methylates the N4 position of cytidine in position 1402 (C1402) of 16S rRNA. In Escherichia coli O7:K1 (strain IAI39 / ExPEC), this protein is Ribosomal RNA small subunit methyltransferase H.